The following is a 311-amino-acid chain: tRNA dimethylallyltransferase (311 aa).

Position 16–23 (16–23 (GATASGKS)) interacts with ATP. 18–23 (TASGKS) provides a ligand contact to substrate. Interaction with substrate tRNA regions lie at residues 41-44 (DSRQ) and 165-169 (QRLIR).

It belongs to the IPP transferase family. In terms of assembly, monomer. Requires Mg(2+) as cofactor.

The catalysed reaction is adenosine(37) in tRNA + dimethylallyl diphosphate = N(6)-dimethylallyladenosine(37) in tRNA + diphosphate. Its function is as follows. Catalyzes the transfer of a dimethylallyl group onto the adenine at position 37 in tRNAs that read codons beginning with uridine, leading to the formation of N6-(dimethylallyl)adenosine (i(6)A). The chain is tRNA dimethylallyltransferase from Chlorobium chlorochromatii (strain CaD3).